A 143-amino-acid chain; its full sequence is Hemoglobin subunit alpha-1 (143 aa).

At S2 the chain carries N-acetylserine. In terms of domain architecture, Globin spans 2 to 143 (SLSAKDKATV…LALALCEKYR (142 aa)). Residue H60 coordinates O2. H89 contacts heme b.

This sequence belongs to the globin family. In terms of assembly, hb 1 is a heterotetramer of two alpha-1 and two beta-1 chains. As to expression, red blood cells.

In terms of biological role, involved in oxygen transport from gills to the various peripheral tissues. The polypeptide is Hemoglobin subunit alpha-1 (hba1) (Boreogadus saida (Polar cod)).